The primary structure comprises 614 residues: Lamin-2 (614 aa).

The segment covering 1–10 (MSAQVSKKRG) has biased composition (basic residues). The tract at residues 1–51 (MSAQVSKKRGGSNPPKTGQHAASSTTSRTESSATSQTIYERQEVETRTQRT) is disordered. Residues 1–76 (MSAQVSKKRG…GTAGLAGSPL (76 aa)) form a head region. The span at 21–37 (AASSTTSRTESSATSQT) shows a compositional bias: low complexity. Residues 77–117 (SRHQEKEEFKLLNNRFANYIDTIRAQQEEISVLRRKVETVS) are coil 1A. The region spanning 81 to 433 (EKEEFKLLNN…ALLRTEEERL (353 aa)) is the IF rod domain. The segment at 118–128 (SKEVVENQKIK) is linker 1. Positions 129–268 (ERYNLEIANL…EEIVSLRNQR (140 aa)) are coil 1B. Residues 269-286 (RTEITEVETRMGEEYQSK) are linker 2. Residues 287 to 426 (IVEQLNDLRA…AELATYNALL (140 aa)) are coil 2. The tract at residues 427-611 (RTEEERLNMK…ADSSDHQKNC (185 aa)) is tail. The tract at residues 433–454 (LNMKSPPFPSTPDSQRRGTKRR) is disordered. The Nuclear localization signal motif lies at 449-458 (RGTKRRIADS). The region spanning 462–581 (TRFRNEASAT…VARREMTQSS (120 aa)) is the LTD domain. Cys-611 is lipidated: S-farnesyl cysteine. A propeptide spans 612 to 614 (VIM) (removed in mature form).

It belongs to the intermediate filament family.

Its subcellular location is the nucleus inner membrane. Functionally, intermediate filament (IF) protein, component of the nuclear lamina, a fibrous layer on the nucleoplasmic side of the inner nuclear membrane, which is thought to provide a framework for the nuclear envelope. This chain is Lamin-2, found in Hypsibius exemplaris (Freshwater tardigrade).